The following is a 356-amino-acid chain: Protein-glutamate methylesterase/protein-glutamine glutaminase (356 aa).

Residues 4 to 121 form the Response regulatory domain; sequence KVLIVDDSAL…QSGMLEYTDL (118 aa). The residue at position 55 (D55) is a 4-aspartylphosphate. The CheB-type methylesterase domain occupies 156 to 349; it reads PLTSSEKLII…RRVLEFFAAH (194 aa). Catalysis depends on residues S169, H195, and D291.

It belongs to the CheB family. In terms of processing, phosphorylated by CheA. Phosphorylation of the N-terminal regulatory domain activates the methylesterase activity.

The protein resides in the cytoplasm. It catalyses the reaction [protein]-L-glutamate 5-O-methyl ester + H2O = L-glutamyl-[protein] + methanol + H(+). It carries out the reaction L-glutaminyl-[protein] + H2O = L-glutamyl-[protein] + NH4(+). Functionally, involved in chemotaxis. Part of a chemotaxis signal transduction system that modulates chemotaxis in response to various stimuli. Catalyzes the demethylation of specific methylglutamate residues introduced into the chemoreceptors (methyl-accepting chemotaxis proteins or MCP) by CheR. Also mediates the irreversible deamidation of specific glutamine residues to glutamic acid. The chain is Protein-glutamate methylesterase/protein-glutamine glutaminase from Thiobacillus denitrificans (strain ATCC 25259 / T1).